Reading from the N-terminus, the 601-residue chain is Glutamyl-tRNA(Gln) amidotransferase subunit B, mitochondrial (601 aa).

The transit peptide at 1–52 directs the protein to the mitochondrion; the sequence is MLQQWLRQSPRAARVLRGSCCRGPQSGSLRHSPLPTAPHRCIRSLQTSATES.

The protein belongs to the GatB/GatE family. GatB subfamily. Subunit of the heterotrimeric GatCAB amidotransferase (AdT) complex, composed of A, B and C subunits.

The protein localises to the mitochondrion. It carries out the reaction L-glutamyl-tRNA(Gln) + L-glutamine + ATP + H2O = L-glutaminyl-tRNA(Gln) + L-glutamate + ADP + phosphate + H(+). Its function is as follows. Allows the formation of correctly charged Gln-tRNA(Gln) through the transamidation of misacylated Glu-tRNA(Gln) in the mitochondria. The reaction takes place in the presence of glutamine and ATP through an activated gamma-phospho-Glu-tRNA(Gln). This Aspergillus fumigatus (strain ATCC MYA-4609 / CBS 101355 / FGSC A1100 / Af293) (Neosartorya fumigata) protein is Glutamyl-tRNA(Gln) amidotransferase subunit B, mitochondrial.